The following is a 149-amino-acid chain: Transcriptional regulator MraZ (149 aa).

SpoVT-AbrB domains are found at residues isoleucine 5–glutamate 52 and alanine 81–valine 124.

This sequence belongs to the MraZ family. In terms of assembly, forms oligomers.

The protein resides in the cytoplasm. It localises to the nucleoid. The polypeptide is Transcriptional regulator MraZ (Nitrosococcus oceani (strain ATCC 19707 / BCRC 17464 / JCM 30415 / NCIMB 11848 / C-107)).